Consider the following 431-residue polypeptide: 5'-deoxyadenosine deaminase (431 aa).

Zn(2+) contacts are provided by His-65 and His-67. Residues Glu-94 and His-185 each contribute to the substrate site. His-212 contacts Zn(2+). 2 residues coordinate substrate: Glu-215 and Asp-300. Asp-300 is a Zn(2+) binding site.

It belongs to the metallo-dependent hydrolases superfamily. MTA/SAH deaminase family. In terms of assembly, homotetramer. Zn(2+) is required as a cofactor.

The enzyme catalyses 5'-deoxyadenosine + H2O + H(+) = 5'-deoxyinosine + NH4(+). It carries out the reaction S-adenosyl-L-homocysteine + H2O + H(+) = S-inosyl-L-homocysteine + NH4(+). It catalyses the reaction S-methyl-5'-thioadenosine + H2O + H(+) = S-methyl-5'-thioinosine + NH4(+). The catalysed reaction is adenosine + H2O + H(+) = inosine + NH4(+). It participates in amino-acid biosynthesis; S-adenosyl-L-methionine biosynthesis. In terms of biological role, catalyzes the deamination of three SAM-derived enzymatic products, namely 5'-deoxyadenosine, S-adenosyl-L-homocysteine, and 5'-methylthioadenosine, to produce the inosine analogs. Can also deaminate adenosine. The preferred substrate for this enzyme is 5'-deoxyadenosine, but all these substrates are efficiently deaminated. Likely functions in a S-adenosyl-L-methionine (SAM) recycling pathway from S-adenosyl-L-homocysteine (SAH) produced from SAM-dependent methylation reactions. May also be involved in the recycling of 5'-deoxyadenosine, whereupon the 5'-deoxyribose moiety of 5'-deoxyinosine is further metabolized to deoxyhexoses used for the biosynthesis of aromatic amino acids in methanogens. This Methanopyrus kandleri (strain AV19 / DSM 6324 / JCM 9639 / NBRC 100938) protein is 5'-deoxyadenosine deaminase.